The following is a 124-amino-acid chain: Fluoride-specific ion channel FluC (124 aa).

4 helical membrane passes run 4–24 (VLFV…ISLL), 35–55 (FGTL…FALG), 62–82 (PEIK…FSTF), and 95–115 (LVKA…VVYL). Residues glycine 74 and threonine 77 each coordinate Na(+).

This sequence belongs to the fluoride channel Fluc/FEX (TC 1.A.43) family.

It is found in the cell inner membrane. The enzyme catalyses fluoride(in) = fluoride(out). Na(+) is not transported, but it plays an essential structural role and its presence is essential for fluoride channel function. Fluoride-specific ion channel. Important for reducing fluoride concentration in the cell, thus reducing its toxicity. The chain is Fluoride-specific ion channel FluC from Shewanella halifaxensis (strain HAW-EB4).